Consider the following 195-residue polypeptide: Imidazoleglycerol-phosphate dehydratase (195 aa).

This sequence belongs to the imidazoleglycerol-phosphate dehydratase family.

Its subcellular location is the cytoplasm. It carries out the reaction D-erythro-1-(imidazol-4-yl)glycerol 3-phosphate = 3-(imidazol-4-yl)-2-oxopropyl phosphate + H2O. Its pathway is amino-acid biosynthesis; L-histidine biosynthesis; L-histidine from 5-phospho-alpha-D-ribose 1-diphosphate: step 6/9. The sequence is that of Imidazoleglycerol-phosphate dehydratase from Campylobacter curvus (strain 525.92).